A 736-amino-acid polypeptide reads, in one-letter code: Myotubularin-related protein 12 (736 aa).

In terms of domain architecture, Myotubularin phosphatase spans 182-558; sequence YLRSTNPEML…RQLSLPSSAF (377 aa). The segment at 672–691 is disordered; sequence SLATQPDHPPPLHHRLPSFG.

It belongs to the protein-tyrosine phosphatase family. Non-receptor class myotubularin subfamily. Heterodimer with lipid phosphatase mtm1. In skeletal muscles, the interaction stabilizes both mtmr12 and mtm1 protein levels.

It localises to the cytoplasm. It is found in the sarcoplasmic reticulum. The protein resides in the myofibril. Its subcellular location is the sarcomere. Its function is as follows. Acts as an adapter for the myotubularin phosphatase mtm1 to regulate mtm1 protein stability and possibly its intracellular location. By stabilizing mtm1 protein levels, required for skeletal muscle maintenance but not for myogenesis. In skeletal muscle cells, does not regulate mtm1 subcellular localization. This Danio rerio (Zebrafish) protein is Myotubularin-related protein 12 (mtmr12).